We begin with the raw amino-acid sequence, 396 residues long: ATP-dependent RNA helicase eIF4A (396 aa).

The short motif at 23–51 (YEFDDMNLNEKLLRGVFGYGFNKPSAIQQ) is the Q motif element. The Helicase ATP-binding domain maps to 54–223 (IMPIIEGNDV…AKFMQNPVRI (170 aa)). 67–74 (AQSGTGKT) contacts ATP. Residues 171–174 (DEAD) carry the DEAD box motif. The Helicase C-terminal domain maps to 234–395 (GIKQFYVNVE…ELPSDIGTLF (162 aa)).

The protein belongs to the DEAD box helicase family. eIF4A subfamily. In terms of assembly, component of the eIF4F complex, which composition varies with external and internal environmental conditions. It is composed of at least eIF4A, eIF4E and eIF4G.

The protein resides in the cytoplasm. It carries out the reaction ATP + H2O = ADP + phosphate + H(+). Functionally, ATP-dependent RNA helicase which is a subunit of the eIF4F complex involved in cap recognition and is required for mRNA binding to ribosome. In the current model of translation initiation, eIF4A unwinds RNA secondary structures in the 5'-UTR of mRNAs which is necessary to allow efficient binding of the small ribosomal subunit, and subsequent scanning for the initiator codon. The sequence is that of ATP-dependent RNA helicase eIF4A (TIF1) from Candida glabrata (strain ATCC 2001 / BCRC 20586 / JCM 3761 / NBRC 0622 / NRRL Y-65 / CBS 138) (Yeast).